The primary structure comprises 365 residues: Chaperone protein DnaJ (365 aa).

Residues 5 to 71 (DFYEILGIAK…QKRQAYDQFG (67 aa)) enclose the J domain. Residues 128–206 (GTTVKIRIPK…CHGKGVVHKQ (79 aa)) form a CR-type zinc finger. Zn(2+) contacts are provided by cysteine 141, cysteine 144, cysteine 158, cysteine 161, cysteine 180, cysteine 183, cysteine 194, and cysteine 197. CXXCXGXG motif repeat units lie at residues 141–148 (CDTCSGTG), 158–165 (CLTCGGAG), 180–187 (CNACSGTG), and 194–201 (CNNCHGKG).

The protein belongs to the DnaJ family. Homodimer. Zn(2+) is required as a cofactor.

It localises to the cytoplasm. Functionally, participates actively in the response to hyperosmotic and heat shock by preventing the aggregation of stress-denatured proteins and by disaggregating proteins, also in an autonomous, DnaK-independent fashion. Unfolded proteins bind initially to DnaJ; upon interaction with the DnaJ-bound protein, DnaK hydrolyzes its bound ATP, resulting in the formation of a stable complex. GrpE releases ADP from DnaK; ATP binding to DnaK triggers the release of the substrate protein, thus completing the reaction cycle. Several rounds of ATP-dependent interactions between DnaJ, DnaK and GrpE are required for fully efficient folding. Also involved, together with DnaK and GrpE, in the DNA replication of plasmids through activation of initiation proteins. This chain is Chaperone protein DnaJ, found in Vesicomyosocius okutanii subsp. Calyptogena okutanii (strain HA).